The following is a 413-amino-acid chain: Serine/threonine-protein phosphatase 7 (413 aa).

The cysteines at positions 28 and 67 are disulfide-linked. Aspartate 84, histidine 86, aspartate 113, and asparagine 145 together coordinate Mn(2+). The active-site Proton donor is histidine 146. Histidine 197 and histidine 303 together coordinate Mn(2+). The tract at residues 391–413 (NVIDSDDEMDKSAMDTNNEQPNS) is disordered. Residues 404–413 (MDTNNEQPNS) show a composition bias toward polar residues.

The protein belongs to the PPP phosphatase family. PP-7 subfamily. Monomer, homodimer, and heteromer. Interacts with calmodulin (CaM3 and CaM4) and HSFA1A/HSF1. Mn(2+) serves as cofactor. Expressed in leaves, and, to a lower extent, in stems and flowers.

It localises to the nucleus. Its subcellular location is the nucleoplasm. It catalyses the reaction O-phospho-L-seryl-[protein] + H2O = L-seryl-[protein] + phosphate. It carries out the reaction O-phospho-L-threonyl-[protein] + H2O = L-threonyl-[protein] + phosphate. Inhibited by NaF and orthovanadate, as well as by divalent cations such as Ni(2+) and Zn(2+). Inhibited by polylysine with myelin basic protein as substrate, but activated by polylysine with pNPP as substrate. Reversibly regulated by redox agents. Inhibited by submillimolar Pi concentrations. Slightly repressed by calmodulin (CaM). Phosphatase active on para-nitrophenylphosphate (pNPP) and on various phosphoproteins such as myelin basic protein. Seems to act as a positive regulator of cryptochrome signaling involved in hypocotyl growth inhibition and cotyledon expansion under white and blue light conditions. Confers thermotolerance. Required for heat shock mediated-signaling pathway that leads to the expression of heat shock proteins (HSPs). In Arabidopsis thaliana (Mouse-ear cress), this protein is Serine/threonine-protein phosphatase 7 (PP7).